Here is a 354-residue protein sequence, read N- to C-terminus: Inositol-tetrakisphosphate 1-kinase 1 (354 aa).

Positions 1-16 are enriched in basic and acidic residues; sequence MRVHEEASEDKEREVE. The interval 1 to 24 is disordered; sequence MRVHEEASEDKEREVEEAPDLMPL. Positions 53 and 95 each coordinate 1D-myo-inositol 1,3,4-trisphosphate. Residues arginine 130 and lysine 180 each coordinate ATP. The 208-residue stretch at 140–347 folds into the ATP-grasp domain; that stretch reads LNLSNAYGEV…FLLSLVQNKY (208 aa). 2 residues coordinate 1D-myo-inositol 1,3,4-trisphosphate: histidine 191 and lysine 223. ATP-binding positions include 212–223 and serine 238; that span reads QEFVNHGGILFK. The Mg(2+) site is built by aspartate 303, aspartate 318, and asparagine 320. Asparagine 320 is a binding site for 1D-myo-inositol 1,3,4-trisphosphate.

This sequence belongs to the ITPK1 family. As to quaternary structure, monomer. Mg(2+) is required as a cofactor. Expressed in roots, leaves, flowers, anthers and embryos.

It catalyses the reaction 1D-myo-inositol 3,4,5,6-tetrakisphosphate + ATP = 1D-myo-inositol 1,3,4,5,6-pentakisphosphate + ADP + H(+). The catalysed reaction is 1D-myo-inositol 1,3,4-trisphosphate + ATP = 1D-myo-inositol 1,3,4,5-tetrakisphosphate + ADP + H(+). The enzyme catalyses 1D-myo-inositol 1,3,4-trisphosphate + ATP = 1D-myo-inositol 1,3,4,6-tetrakisphosphate + ADP + H(+). In terms of biological role, kinase that can phosphorylate various inositol polyphosphate such as Ins(3,4,5,6)P4 or Ins(1,3,4)P3 and participates in phytic acid biosynthesis in developing seeds. Phytic acid is the primary storage form of phosphorus in cereal grains and other plant seeds. The chain is Inositol-tetrakisphosphate 1-kinase 1 from Oryza sativa subsp. japonica (Rice).